The sequence spans 1430 residues: Gag-Pol polyprotein (1430 aa).

The N-myristoyl glycine; by host moiety is linked to residue G2. Residues 7–31 are interaction with Gp41; it reads VLSGGKLDAWEKIRLRPGGKKKYKL. The interval 8-43 is interaction with host CALM1; sequence LSGGKLDAWEKIRLRPGGKKKYKLKHLVWASRELER. An interaction with host AP3D1 region spans residues 12–19; the sequence is KLDAWEKI. Positions 14-33 are interaction with membrane phosphatidylinositol 4,5-bisphosphate and RNA; that stretch reads DAWEKIRLRPGGKKKYKLKH. Positions 16-22 match the Nuclear export signal motif; it reads WEKIRLR. A Nuclear localization signal motif is present at residues 26–32; sequence KKKYKLK. Positions 73–77 are interaction with membrane phosphatidylinositol 4,5-bisphosphate; sequence EEIKS. Y128 is subject to Phosphotyrosine; by host. The interaction with human PPIA/CYPA and NUP153 stretch occupies residues 185–223; the sequence is NTVGGHQAAMQMLKDTINDEAAEWDRLHPVHAGPIPPGQ. A dimerization/Multimerization of capsid protein p24 region spans residues 273-359; sequence YSPVSILDIR…GGPSHKARIL (87 aa). CCHC-type zinc fingers lie at residues 385–402 and 406–423; these read VKCF…NCRA and KGCW…DCTE. The segment at 439-480 is disordered; that stretch reads EAREFSSEQTRANSPTSRELRVRGGDNPLSEAGDQRQGTEPS. The segment covering 445-455 has biased composition (polar residues); the sequence is SEQTRANSPTS. Residues 484 to 488 are dimerization of protease; the sequence is PQITL. Residues 503-572 form the Peptidase A2 domain; it reads REALLDTGAD…TPVNIIGRNL (70 aa). D508 functions as the For protease activity; shared with dimeric partner in the catalytic mechanism. 2 dimerization of protease regions span residues 532-538 and 571-583; these read GIGGFIK and NLLT…LNFP. The 191-residue stretch at 626 to 816 folds into the Reverse transcriptase domain; the sequence is EGKISKIGPE…PPFLWMGYEL (191 aa). Positions 692, 767, and 768 each coordinate Mg(2+). Residues 809 to 817 form an RT 'primer grip' region; sequence FLWMGYELH. Residues 980-996 carry the Tryptophan repeat motif motif; it reads WETWWTEYWQATWIPEW. Residues 1016–1139 enclose the RNase H type-1 domain; the sequence is IVGAETFYVD…VDKLVSAGIR (124 aa). Positions 1025, 1060, 1080, and 1131 each coordinate Mg(2+). The segment at 1145–1186 adopts an Integrase-type zinc-finger fold; it reads DGIDKAQEEHEKYHNNWRAMASDFNLPPIVAKEIVASCDKCQ. The Zn(2+) site is built by H1154, H1158, C1182, and C1185. Residues 1196-1346 form the Integrase catalytic domain; sequence VDCSPGIWQL…SAGERIVDII (151 aa). Residues D1206, D1258, and E1294 each coordinate Mg(2+). Positions 1365-1412 form a DNA-binding region, integrase-type; that stretch reads FRVYYRDSREPIWKGPAKLLWKGEGAVVIQDNSEIKVVPRRKAKIIRD.

As to quaternary structure, homotrimer; further assembles as hexamers of trimers. Interacts with gp41 (via C-terminus). Interacts with host CALM1; this interaction induces a conformational change in the Matrix protein, triggering exposure of the myristate group. Interacts with host AP3D1; this interaction allows the polyprotein trafficking to multivesicular bodies during virus assembly. Part of the pre-integration complex (PIC) which is composed of viral genome, matrix protein, Vpr and integrase. In terms of assembly, homodimer; the homodimer further multimerizes as homohexamers or homopentamers. Interacts with human PPIA/CYPA; This interaction stabilizes the capsid. Interacts with human NUP153. Interacts with host PDZD8; this interaction stabilizes the capsid. Interacts with monkey TRIM5; this interaction destabilizes the capsid. Homodimer, whose active site consists of two apposed aspartic acid residues. As to quaternary structure, heterodimer of p66 RT and p51 RT (RT p66/p51). Heterodimerization of RT is essential for DNA polymerase activity. The overall folding of the subdomains is similar in p66 RT and p51 RT but the spatial arrangements of the subdomains are dramatically different. In terms of assembly, homotetramer; may further associate as a homohexadecamer. Part of the pre-integration complex (PIC) which is composed of viral genome, matrix protein, Vpr and integrase. Interacts with human SMARCB1/INI1 and human PSIP1/LEDGF isoform 1. Interacts with human KPNA3; this interaction might play a role in nuclear import of the pre-integration complex. Interacts with human NUP153; this interaction might play a role in nuclear import of the pre-integration complex. Mg(2+) serves as cofactor. In terms of processing, specific enzymatic cleavages by the viral protease yield mature proteins. The protease is released by autocatalytic cleavage. The polyprotein is cleaved during and after budding, this process is termed maturation. Proteolytic cleavage of p66 RT removes the RNase H domain to yield the p51 RT subunit. Nucleocapsid protein p7 might be further cleaved after virus entry. Tyrosine phosphorylated presumably in the virion by a host kinase. Phosphorylation is apparently not a major regulator of membrane association. Post-translationally, phosphorylated possibly by host MAPK1; this phosphorylation is necessary for Pin1-mediated virion uncoating. In terms of processing, methylated by host PRMT6, impairing its function by reducing RNA annealing and the initiation of reverse transcription.

It localises to the host cell membrane. Its subcellular location is the host endosome. It is found in the host multivesicular body. The protein resides in the virion membrane. The protein localises to the host nucleus. It localises to the host cytoplasm. Its subcellular location is the virion. The enzyme catalyses Specific for a P1 residue that is hydrophobic, and P1' variable, but often Pro.. The catalysed reaction is Endohydrolysis of RNA in RNA/DNA hybrids. Three different cleavage modes: 1. sequence-specific internal cleavage of RNA. Human immunodeficiency virus type 1 and Moloney murine leukemia virus enzymes prefer to cleave the RNA strand one nucleotide away from the RNA-DNA junction. 2. RNA 5'-end directed cleavage 13-19 nucleotides from the RNA end. 3. DNA 3'-end directed cleavage 15-20 nucleotides away from the primer terminus.. It catalyses the reaction 3'-end directed exonucleolytic cleavage of viral RNA-DNA hybrid.. It carries out the reaction DNA(n) + a 2'-deoxyribonucleoside 5'-triphosphate = DNA(n+1) + diphosphate. With respect to regulation, protease: The viral protease is inhibited by many synthetic protease inhibitors (PIs), such as amprenavir, atazanavir, indinavir, loprinavir, nelfinavir, ritonavir and saquinavir. Use of protease inhibitors in tritherapy regimens permit more ambitious therapeutic strategies. Reverse transcriptase/ribonuclease H: RT can be inhibited either by nucleoside RT inhibitors (NRTIs) or by non nucleoside RT inhibitors (NNRTIs). NRTIs act as chain terminators, whereas NNRTIs inhibit DNA polymerization by binding a small hydrophobic pocket near the RT active site and inducing an allosteric change in this region. Classical NRTIs are abacavir, adefovir (PMEA), didanosine (ddI), lamivudine (3TC), stavudine (d4T), tenofovir (PMPA), zalcitabine (ddC), and zidovudine (AZT). Classical NNRTIs are atevirdine (BHAP U-87201E), delavirdine, efavirenz (DMP-266), emivirine (I-EBU), and nevirapine (BI-RG-587). The tritherapies used as a basic effective treatment of AIDS associate two NRTIs and one NNRTI. Functionally, mediates, with Gag polyprotein, the essential events in virion assembly, including binding the plasma membrane, making the protein-protein interactions necessary to create spherical particles, recruiting the viral Env proteins, and packaging the genomic RNA via direct interactions with the RNA packaging sequence (Psi). Gag-Pol polyprotein may regulate its own translation, by the binding genomic RNA in the 5'-UTR. At low concentration, the polyprotein would promote translation, whereas at high concentration, the polyprotein would encapsidate genomic RNA and then shut off translation. Targets the polyprotein to the plasma membrane via a multipartite membrane-binding signal, that includes its myristoylated N-terminus. Matrix protein is part of the pre-integration complex. Implicated in the release from host cell mediated by Vpu. Binds to RNA. Its function is as follows. Forms the conical core that encapsulates the genomic RNA-nucleocapsid complex in the virion. Most core are conical, with only 7% tubular. The core is constituted by capsid protein hexamer subunits. The core is disassembled soon after virion entry. Host restriction factors such as TRIM5-alpha or TRIMCyp bind retroviral capsids and cause premature capsid disassembly, leading to blocks in reverse transcription. Capsid restriction by TRIM5 is one of the factors which restricts HIV-1 to the human species. Host PIN1 apparently facilitates the virion uncoating. On the other hand, interactions with PDZD8 or CYPA stabilize the capsid. In terms of biological role, encapsulates and protects viral dimeric unspliced genomic RNA (gRNA). Binds these RNAs through its zinc fingers. Acts as a nucleic acid chaperone which is involved in rearangement of nucleic acid secondary structure during gRNA retrotranscription. Also facilitates template switch leading to recombination. As part of the polyprotein, participates in gRNA dimerization, packaging, tRNA incorporation and virion assembly. Functionally, aspartyl protease that mediates proteolytic cleavages of Gag and Gag-Pol polyproteins during or shortly after the release of the virion from the plasma membrane. Cleavages take place as an ordered, step-wise cascade to yield mature proteins. This process is called maturation. Displays maximal activity during the budding process just prior to particle release from the cell. Also cleaves Nef and Vif, probably concomitantly with viral structural proteins on maturation of virus particles. Hydrolyzes host EIF4GI and PABP1 in order to shut off the capped cellular mRNA translation. The resulting inhibition of cellular protein synthesis serves to ensure maximal viral gene expression and to evade host immune response. Also mediates cleavage of host YTHDF3. Mediates cleavage of host CARD8, thereby activating the CARD8 inflammasome, leading to the clearance of latent HIV-1 in patient CD4(+) T-cells after viral reactivation; in contrast, HIV-1 can evade CARD8-sensing when its protease remains inactive in infected cells prior to viral budding. Multifunctional enzyme that converts the viral RNA genome into dsDNA in the cytoplasm, shortly after virus entry into the cell. This enzyme displays a DNA polymerase activity that can copy either DNA or RNA templates, and a ribonuclease H (RNase H) activity that cleaves the RNA strand of RNA-DNA heteroduplexes in a partially processive 3' to 5' endonucleasic mode. Conversion of viral genomic RNA into dsDNA requires many steps. A tRNA(3)-Lys binds to the primer-binding site (PBS) situated at the 5'-end of the viral RNA. RT uses the 3' end of the tRNA primer to perform a short round of RNA-dependent minus-strand DNA synthesis. The reading proceeds through the U5 region and ends after the repeated (R) region which is present at both ends of viral RNA. The portion of the RNA-DNA heteroduplex is digested by the RNase H, resulting in a ssDNA product attached to the tRNA primer. This ssDNA/tRNA hybridizes with the identical R region situated at the 3' end of viral RNA. This template exchange, known as minus-strand DNA strong stop transfer, can be either intra- or intermolecular. RT uses the 3' end of this newly synthesized short ssDNA to perform the RNA-dependent minus-strand DNA synthesis of the whole template. RNase H digests the RNA template except for two polypurine tracts (PPTs) situated at the 5'-end and near the center of the genome. It is not clear if both polymerase and RNase H activities are simultaneous. RNase H probably can proceed both in a polymerase-dependent (RNA cut into small fragments by the same RT performing DNA synthesis) and a polymerase-independent mode (cleavage of remaining RNA fragments by free RTs). Secondly, RT performs DNA-directed plus-strand DNA synthesis using the PPTs that have not been removed by RNase H as primers. PPTs and tRNA primers are then removed by RNase H. The 3' and 5' ssDNA PBS regions hybridize to form a circular dsDNA intermediate. Strand displacement synthesis by RT to the PBS and PPT ends produces a blunt ended, linear dsDNA copy of the viral genome that includes long terminal repeats (LTRs) at both ends. Its function is as follows. Catalyzes viral DNA integration into the host chromosome, by performing a series of DNA cutting and joining reactions. This enzyme activity takes place after virion entry into a cell and reverse transcription of the RNA genome in dsDNA. The first step in the integration process is 3' processing. This step requires a complex comprising the viral genome, matrix protein, Vpr and integrase. This complex is called the pre-integration complex (PIC). The integrase protein removes 2 nucleotides from each 3' end of the viral DNA, leaving recessed CA OH's at the 3' ends. In the second step, the PIC enters cell nucleus. This process is mediated through integrase and Vpr proteins, and allows the virus to infect a non dividing cell. This ability to enter the nucleus is specific of lentiviruses, other retroviruses cannot and rely on cell division to access cell chromosomes. In the third step, termed strand transfer, the integrase protein joins the previously processed 3' ends to the 5' ends of strands of target cellular DNA at the site of integration. The 5'-ends are produced by integrase-catalyzed staggered cuts, 5 bp apart. A Y-shaped, gapped, recombination intermediate results, with the 5'-ends of the viral DNA strands and the 3' ends of target DNA strands remaining unjoined, flanking a gap of 5 bp. The last step is viral DNA integration into host chromosome. This involves host DNA repair synthesis in which the 5 bp gaps between the unjoined strands are filled in and then ligated. Since this process occurs at both cuts flanking the HIV genome, a 5 bp duplication of host DNA is produced at the ends of HIV-1 integration. Alternatively, Integrase may catalyze the excision of viral DNA just after strand transfer, this is termed disintegration. This Homo sapiens (Human) protein is Gag-Pol polyprotein (gag-pol).